The primary structure comprises 249 residues: Capsid protein (249 aa).

The segment at 1–33 (MDTDGDNDVFGSGNDTRNNDDKKKEEMKQNISD) is disordered. The segment covering 17–28 (RNNDDKKKEEMK) has biased composition (basic and acidic residues).

Belongs to the closteroviridae capsid protein family.

It is found in the virion. In terms of biological role, capsid protein self-assembles to form filamentous capsids, about 650-850 nm in length. In Beta vulgaris (Sugar beet), this protein is Capsid protein.